Reading from the N-terminus, the 153-residue chain is Transthyretin (153 aa).

Residues 1–19 form the signal peptide; that stretch reads MASFKSFLLLALLAIVSEA. Cys34 is subject to Sulfocysteine. 2 residues coordinate L-thyroxine: Lys39 and Glu78. N-linked (GlcNAc...) asparagine glycosylation is present at Asn81. Residue Ser141 participates in L-thyroxine binding.

It belongs to the transthyretin family. In terms of assembly, homotetramer. Dimer of dimers. In the homotetramer, subunits assemble around a central channel that can accommodate two ligand molecules. Interacts with rbp4. Post-translationally, sulfonation of the reactive cysteine Cys-34 enhances the stability of the native conformation of TTR, avoiding misassembly of the protein leading to amyloid formation. As to expression, detected in plasma (at protein level). Expressed during metamorphosis in tadpole liver, but not in tadpole brain nor adult liver. Between 1.5 and 3 days of development, also expressed in the mesoderm of the kidney.

Its subcellular location is the secreted. Its function is as follows. Thyroid hormone-binding protein, with a much higher binding affinity for triiodothyronine (T3) than for thyroxine (T4). Probably transports triiodothyronine from the bloodstream to the brain. The sequence is that of Transthyretin (ttr) from Xenopus laevis (African clawed frog).